A 163-amino-acid chain; its full sequence is Probable ribosome biogenesis protein RLP24 (163 aa).

Belongs to the eukaryotic ribosomal protein eL24 family. Associated with nucleolar and cytoplasmic pre-60S particles. At the end of biogenesis it dissociates from cytoplasmic pre-60S particles and is likely to be exchanged for its ribosomal homolog, RPL24.

It is found in the nucleus. The protein localises to the nucleolus. Functionally, involved in the biogenesis of the 60S ribosomal subunit. Ensures the docking of GTPBP4/NOG1 to pre-60S particles. The sequence is that of Probable ribosome biogenesis protein RLP24 (RSL24D1) from Homo sapiens (Human).